We begin with the raw amino-acid sequence, 85 residues long: Sodium channel neurotoxin MeuNaTxalpha-2 (85 aa).

The N-terminal stretch at 1–19 is a signal peptide; it reads MNYLVMISLALLLMTGVES. The LCN-type CS-alpha/beta domain occupies 21-83; it reads RDAYIANDRN…VPIRIPGECR (63 aa). Disulfide bonds link cysteine 31/cysteine 82, cysteine 35/cysteine 55, cysteine 41/cysteine 65, and cysteine 45/cysteine 67. Arginine amide is present on arginine 83.

The protein belongs to the long (4 C-C) scorpion toxin superfamily. Sodium channel inhibitor family. Alpha subfamily. Expressed by the venom gland.

It is found in the secreted. Functionally, alpha toxins bind voltage-independently at site-3 of sodium channels (Nav) and inhibit the inactivation of the activated channels, thereby blocking neuronal transmission. This toxin inhibits inactivation of Nav1.4/SCN4A (EC(50)=2.23 uM) and drosophila DmNav1 (EC(50)=220 nM). The toxin (1 uM) does not significantly shift the midpoint of activation at the two channels, but induces a significant depolarizing shift in the V(1/2) of inactivation of the channels. In addition, the toxin accelerates the recovery from fast inactivation in Nav1.4/SCN4A and DmNav1. It also shows antimicrobial activity. In Mesobuthus eupeus (Lesser Asian scorpion), this protein is Sodium channel neurotoxin MeuNaTxalpha-2.